Here is a 152-residue protein sequence, read N- to C-terminus: SsrA-binding protein (152 aa).

A disordered region spans residues 124–152 (KKLHDKRDTAAERDWQRDKARLMKGDRGD). A compositionally biased stretch (basic and acidic residues) spans 128–152 (DKRDTAAERDWQRDKARLMKGDRGD).

The protein belongs to the SmpB family.

The protein localises to the cytoplasm. Functionally, required for rescue of stalled ribosomes mediated by trans-translation. Binds to transfer-messenger RNA (tmRNA), required for stable association of tmRNA with ribosomes. tmRNA and SmpB together mimic tRNA shape, replacing the anticodon stem-loop with SmpB. tmRNA is encoded by the ssrA gene; the 2 termini fold to resemble tRNA(Ala) and it encodes a 'tag peptide', a short internal open reading frame. During trans-translation Ala-aminoacylated tmRNA acts like a tRNA, entering the A-site of stalled ribosomes, displacing the stalled mRNA. The ribosome then switches to translate the ORF on the tmRNA; the nascent peptide is terminated with the 'tag peptide' encoded by the tmRNA and targeted for degradation. The ribosome is freed to recommence translation, which seems to be the essential function of trans-translation. This chain is SsrA-binding protein, found in Caulobacter vibrioides (strain ATCC 19089 / CIP 103742 / CB 15) (Caulobacter crescentus).